A 134-amino-acid chain; its full sequence is Profilin-1 (134 aa).

A disulfide bridge connects residues cysteine 13 and cysteine 118. Positions 84 to 100 (AVIRGKKGSGGITIKKT) match the Involved in PIP2 interaction motif. At threonine 114 the chain carries Phosphothreonine.

This sequence belongs to the profilin family. Occurs in many kinds of cells as a complex with monomeric actin in a 1:1 ratio. In terms of processing, phosphorylated by MAP kinases.

The protein localises to the cytoplasm. It localises to the cytoskeleton. Functionally, binds to actin and affects the structure of the cytoskeleton. At high concentrations, profilin prevents the polymerization of actin, whereas it enhances it at low concentrations. By binding to PIP2, it inhibits the formation of IP3 and DG. In Olea europaea (Common olive), this protein is Profilin-1 (PRO1).